The following is a 221-amino-acid chain: GTP cyclohydrolase III (221 aa).

It belongs to the archaeal-type GTP cyclohydrolase family.

It carries out the reaction GTP + 3 H2O = 2-amino-5-formylamino-6-(5-phospho-D-ribosylamino)pyrimidin-4(3H)-one + 2 phosphate + 2 H(+). Catalyzes the formation of 2-amino-5-formylamino-6-ribofuranosylamino-4(3H)-pyrimidinone ribonucleotide monophosphate and inorganic phosphate from GTP. Also has an independent pyrophosphate phosphohydrolase activity. This is GTP cyclohydrolase III from Pyrobaculum neutrophilum (strain DSM 2338 / JCM 9278 / NBRC 100436 / V24Sta) (Thermoproteus neutrophilus).